Consider the following 201-residue polypeptide: Lymphocyte antigen 6 complex locus protein G5b (201 aa).

A signal peptide spans 1 to 18 (MKVHMLVGVLVMVGFTVG). One can recognise a UPAR/Ly6 domain in the interval 26 to 118 (RTCHFCLVED…SPQLQSSLPE (93 aa)). Intrachain disulfides connect Cys-28/Cys-55, Cys-31/Cys-40, Cys-47/Cys-73, Cys-81/Cys-98, and Cys-99/Cys-104. 2 N-linked (GlcNAc...) asparagine glycosylation sites follow: Asn-141 and Asn-183.

In terms of assembly, forms oligomer. In terms of processing, N-glycosylated.

The protein resides in the secreted. This is Lymphocyte antigen 6 complex locus protein G5b (LY6G5B) from Homo sapiens (Human).